The primary structure comprises 346 residues: Phosphoribosylformylglycinamidine cyclo-ligase (346 aa).

It belongs to the AIR synthase family.

The protein resides in the cytoplasm. The enzyme catalyses 2-formamido-N(1)-(5-O-phospho-beta-D-ribosyl)acetamidine + ATP = 5-amino-1-(5-phospho-beta-D-ribosyl)imidazole + ADP + phosphate + H(+). It participates in purine metabolism; IMP biosynthesis via de novo pathway; 5-amino-1-(5-phospho-D-ribosyl)imidazole from N(2)-formyl-N(1)-(5-phospho-D-ribosyl)glycinamide: step 2/2. The chain is Phosphoribosylformylglycinamidine cyclo-ligase from Polaromonas sp. (strain JS666 / ATCC BAA-500).